A 42-amino-acid polypeptide reads, in one-letter code: Delta-actinopoditoxin-Mb1a (42 aa).

4 disulfides stabilise this stretch: Cys-1–Cys-15, Cys-8–Cys-20, Cys-14–Cys-31, and Cys-16–Cys-42.

This sequence belongs to the neurotoxin 06 (delta-actx) family. Expressed by the venom gland.

The protein resides in the secreted. Its function is as follows. Neurotoxin that slows the inactivation of vertebrate tetrodotoxin-sensitive voltage-gated sodium channels (Nav) and most likely insect sodium channels presumably by binding to site 3 of the channel. Effects are an increase in resting tension, a muscle fasciculation and a decrease in indirect twitch tension. It fails to affect tetrodotoxin-resistant sodium currents. In vivo, is lethal to both vertebrates and insects. This is Delta-actinopoditoxin-Mb1a from Missulena bradleyi (Eastern mouse spider).